The following is a 352-amino-acid chain: Chorismate synthase (352 aa).

NADP(+) is bound at residue R48. Residues 125 to 127 (RSS), 237 to 238 (NA), G278, 293 to 297 (KPTSS), and R319 each bind FMN.

Belongs to the chorismate synthase family. In terms of assembly, homotetramer. It depends on FMNH2 as a cofactor.

The catalysed reaction is 5-O-(1-carboxyvinyl)-3-phosphoshikimate = chorismate + phosphate. The protein operates within metabolic intermediate biosynthesis; chorismate biosynthesis; chorismate from D-erythrose 4-phosphate and phosphoenolpyruvate: step 7/7. Functionally, catalyzes the anti-1,4-elimination of the C-3 phosphate and the C-6 proR hydrogen from 5-enolpyruvylshikimate-3-phosphate (EPSP) to yield chorismate, which is the branch point compound that serves as the starting substrate for the three terminal pathways of aromatic amino acid biosynthesis. This reaction introduces a second double bond into the aromatic ring system. This Francisella tularensis subsp. mediasiatica (strain FSC147) protein is Chorismate synthase.